We begin with the raw amino-acid sequence, 205 residues long: Methylamine utilization protein MauD (205 aa).

Residues 5-25 traverse the membrane as a helical segment; that stretch reads IMIASNVLLWGAFLALAALML. The Thioredoxin domain maps to 50–184; the sequence is PDIGERSPVF…VESLFETTRV (135 aa).

The protein resides in the membrane. The protein operates within one-carbon metabolism; methylamine degradation. Functionally, may be specifically involved in the processing, transport, and/or maturation of the MADH beta-subunit. In Methylobacillus flagellatus (strain ATCC 51484 / DSM 6875 / VKM B-1610 / KT), this protein is Methylamine utilization protein MauD (mauD).